The sequence spans 1030 residues: MKVKEETLKNLGDGVVLRPVDHCSSIWSMKMNMKNFLKKLHISPNQSDEAEGSISTTKSNHHKSIDVSSSSSPRSHHSNSPEIKPFSGLSNWLSSVGHRKIPSPPNSFNAKNRAATVDDTVVVNGSEHVDLGSKDPAVEEENQIQLALELSAREDPEATQIEAIKQFSLGSCAPENSPAELIAYRYWNYNCLGYDDKILDGFYDLYGVLNASSAERIPPLLDLQGTPVSDGVTWEAVLVNRSGDSNLLRLEQMALDIAAKSRSVSSSGFVNSELVRKLAILVGDYMGGPVVHPESMLRAWRSLSYSLKATLGSMVLPLGSLTIGLARHRALLFKVLCDSVGVPCRIVKGQQYTGSEDVAMNFIKADDGREYIVDLMGDPGTLIPADAAGLQIDYDESAYSASPGDNDSIHVASSSNGIESSYEENTEFRTGEHRSSTKSSGERNQSGGGGDLIVHPNISREDVKNQKKVEKAPFQNLSSRPIHSFTHMRSPSWTEGVSSPAAQRMKVKDVSQYMIDAAKENPRLAQKLHDVLLESGVVAPPNLFSEVYPQQLEATVESKNSTEAKKERGKDLETTQEGRHQNGFGPVRFLPPLPRVQSKTNAHDQRDNGKVVSQSDSSHSEASSTEYARTVPAAVAAAAVVASSMVAAAAAKSANSDSSPIELPAAAAATATAAAVVATAAAVSRQLELGSNSDGDDGSGGHEPQGSGDSNHGPNSGGERISDKSIGNESSKSDCDDVSDCEILWEEITVGERIGLGSYGEVYRGDWHGTEVAVKKFLDQDLTGEALEEFRSEVRIMKKLRHPNIVLFMGAVTRPPNLSIVTEFLPRGSLYRLIHRPNNQLDERRRLRMALDAARGMNYLHSCNPMIVHRDLKSPNLLVDKNWVVKVCDFGLSRMKHSTYLSSKSTAGTAEWMAPEVLRNEPADEKCDVYSYGVILWELFTLQQPWGKMNPMQVVGAVGFQHRRLDIPDFVDPAIADLISKCWQTDSKLRPSFAEIMASLKRLQKPVTGSNIPRPVPSSSSLPTEHEQKD.

Polar residues-rich tracts occupy residues 44–58 and 399–419; these read PNQS…STTK and YSAS…NGIE. Disordered regions lie at residues 44-84, 399-474, 555-625, and 689-736; these read PNQS…PEIK, YSAS…KAPF, TVES…ASST, and LGSN…SDCD. Basic and acidic residues-rich tracts occupy residues 426-435, 458-471, and 560-580; these read TEFRTGEHRS, ISRE…KVEK, and NSTE…EGRH. Positions 613–625 are enriched in low complexity; sequence SQSDSSHSEASST. Residues 748–1003 form the Protein kinase domain; that stretch reads ITVGERIGLG…AEIMASLKRL (256 aa). Residues 754 to 762 and Lys775 contribute to the ATP site; that span reads IGLGSYGEV. Asp871 (proton acceptor) is an active-site residue. A compositionally biased stretch (polar residues) spans 1007–1023; it reads VTGSNIPRPVPSSSSLP. The tract at residues 1007 to 1030 is disordered; the sequence is VTGSNIPRPVPSSSSLPTEHEQKD.

The protein belongs to the protein kinase superfamily. Ser/Thr protein kinase family. As to quaternary structure, interacts with UGT72E1. Expressed roots, rosette and cauline leaves, and at lower levels in flowers and siliques.

It is found in the nucleus. It carries out the reaction L-seryl-[protein] + ATP = O-phospho-L-seryl-[protein] + ADP + H(+). The enzyme catalyses L-threonyl-[protein] + ATP = O-phospho-L-threonyl-[protein] + ADP + H(+). In terms of biological role, acts as a negative regulator of salt tolerance. Mediates sugar response during early seedling development. This chain is Probable serine/threonine-protein kinase SIS8, found in Arabidopsis thaliana (Mouse-ear cress).